Here is a 504-residue protein sequence, read N- to C-terminus: D-alanine--D-alanyl carrier protein ligase (504 aa).

ATP is bound at residue threonine 152–serine 153. Aspartate 197 is a binding site for D-alanine. Residue asparagine 292–threonine 297 participates in ATP binding. Valine 301 serves as a coordination point for D-alanine. ATP-binding positions include aspartate 383, tyrosine 394 to arginine 397, and lysine 492. Lysine 492 is a binding site for D-alanine.

This sequence belongs to the ATP-dependent AMP-binding enzyme family. DltA subfamily.

It localises to the cytoplasm. It carries out the reaction holo-[D-alanyl-carrier protein] + D-alanine + ATP = D-alanyl-[D-alanyl-carrier protein] + AMP + diphosphate. The protein operates within cell wall biogenesis; lipoteichoic acid biosynthesis. Functionally, catalyzes the first step in the D-alanylation of lipoteichoic acid (LTA), the activation of D-alanine and its transfer onto the D-alanyl carrier protein (Dcp) DltC. In an ATP-dependent two-step reaction, forms a high energy D-alanyl-AMP intermediate, followed by transfer of the D-alanyl residue as a thiol ester to the phosphopantheinyl prosthetic group of the Dcp. D-alanylation of LTA plays an important role in modulating the properties of the cell wall in Gram-positive bacteria, influencing the net charge of the cell wall. This is D-alanine--D-alanyl carrier protein ligase from Bacillus cytotoxicus (strain DSM 22905 / CIP 110041 / 391-98 / NVH 391-98).